Here is a 401-residue protein sequence, read N- to C-terminus: S-adenosylmethionine synthase (401 aa).

Histidine 15 lines the ATP pocket. Aspartate 17 provides a ligand contact to Mg(2+). Glutamate 48 is a K(+) binding site. 2 residues coordinate L-methionine: glutamate 61 and glutamine 104. Positions 104 to 114 are flexible loop; sequence QSPDIALGVDR. ATP contacts are provided by residues 179–181, 246–247, aspartate 255, 261–262, alanine 278, and lysine 282; these read DGK, RF, and RK. Aspartate 255 lines the L-methionine pocket. Lysine 286 is a binding site for L-methionine.

Belongs to the AdoMet synthase family. In terms of assembly, homotetramer; dimer of dimers. Mg(2+) is required as a cofactor. Requires K(+) as cofactor.

The protein localises to the cytoplasm. It catalyses the reaction L-methionine + ATP + H2O = S-adenosyl-L-methionine + phosphate + diphosphate. The protein operates within amino-acid biosynthesis; S-adenosyl-L-methionine biosynthesis; S-adenosyl-L-methionine from L-methionine: step 1/1. Catalyzes the formation of S-adenosylmethionine (AdoMet) from methionine and ATP. The overall synthetic reaction is composed of two sequential steps, AdoMet formation and the subsequent tripolyphosphate hydrolysis which occurs prior to release of AdoMet from the enzyme. This is S-adenosylmethionine synthase from Petrotoga mobilis (strain DSM 10674 / SJ95).